The sequence spans 96 residues: Protein TraA (96 aa).

This Escherichia coli protein is Protein TraA (traA).